A 288-amino-acid polypeptide reads, in one-letter code: Bifunctional protein FolD (288 aa).

Residues 166–168 (GAS) and Ile232 contribute to the NADP(+) site.

The protein belongs to the tetrahydrofolate dehydrogenase/cyclohydrolase family. Homodimer.

It carries out the reaction (6R)-5,10-methylene-5,6,7,8-tetrahydrofolate + NADP(+) = (6R)-5,10-methenyltetrahydrofolate + NADPH. The enzyme catalyses (6R)-5,10-methenyltetrahydrofolate + H2O = (6R)-10-formyltetrahydrofolate + H(+). It participates in one-carbon metabolism; tetrahydrofolate interconversion. Its function is as follows. Catalyzes the oxidation of 5,10-methylenetetrahydrofolate to 5,10-methenyltetrahydrofolate and then the hydrolysis of 5,10-methenyltetrahydrofolate to 10-formyltetrahydrofolate. This is Bifunctional protein FolD from Cronobacter sakazakii (strain ATCC BAA-894) (Enterobacter sakazakii).